Consider the following 366-residue polypeptide: S-adenosylmethionine:tRNA ribosyltransferase-isomerase (366 aa).

It belongs to the QueA family. As to quaternary structure, monomer.

It localises to the cytoplasm. The catalysed reaction is 7-aminomethyl-7-carbaguanosine(34) in tRNA + S-adenosyl-L-methionine = epoxyqueuosine(34) in tRNA + adenine + L-methionine + 2 H(+). It participates in tRNA modification; tRNA-queuosine biosynthesis. Its function is as follows. Transfers and isomerizes the ribose moiety from AdoMet to the 7-aminomethyl group of 7-deazaguanine (preQ1-tRNA) to give epoxyqueuosine (oQ-tRNA). The polypeptide is S-adenosylmethionine:tRNA ribosyltransferase-isomerase (Bradyrhizobium diazoefficiens (strain JCM 10833 / BCRC 13528 / IAM 13628 / NBRC 14792 / USDA 110)).